The primary structure comprises 447 residues: Trigger factor (447 aa).

The PPIase FKBP-type domain maps to 164–249; that stretch reads GNQVTFDFEG…VKLVEKSKLP (86 aa).

Belongs to the FKBP-type PPIase family. Tig subfamily.

The protein resides in the cytoplasm. It catalyses the reaction [protein]-peptidylproline (omega=180) = [protein]-peptidylproline (omega=0). In terms of biological role, involved in protein export. Acts as a chaperone by maintaining the newly synthesized protein in an open conformation. Functions as a peptidyl-prolyl cis-trans isomerase. The sequence is that of Trigger factor from Psychrobacter cryohalolentis (strain ATCC BAA-1226 / DSM 17306 / VKM B-2378 / K5).